The following is a 715-amino-acid chain: Polyribonucleotide nucleotidyltransferase (715 aa).

Residues aspartate 493 and aspartate 499 each contribute to the Mg(2+) site. A KH domain is found at 560-619 (PRMITVKINPEKIRDVIGKGGSVIRALTEETGTTIDISDDGVVTIASTSSEGMAEAKKRI). The S1 motif domain maps to 629 to 697 (GQVYEGTVLK…EKGRVRLSAK (69 aa)).

It belongs to the polyribonucleotide nucleotidyltransferase family. It depends on Mg(2+) as a cofactor.

It is found in the cytoplasm. The enzyme catalyses RNA(n+1) + phosphate = RNA(n) + a ribonucleoside 5'-diphosphate. Functionally, involved in mRNA degradation. Catalyzes the phosphorolysis of single-stranded polyribonucleotides processively in the 3'- to 5'-direction. The protein is Polyribonucleotide nucleotidyltransferase of Burkholderia orbicola (strain MC0-3).